Consider the following 327-residue polypeptide: GTP 3',8-cyclase (327 aa).

Residues 7-232 form the Radical SAM core domain; it reads HHDRQFRYLR…IKRDRTAGPA (226 aa). Arginine 16 is a GTP binding site. [4Fe-4S] cluster-binding residues include cysteine 23 and cysteine 27. S-adenosyl-L-methionine is bound at residue tyrosine 29. Cysteine 30 is a [4Fe-4S] cluster binding site. Residue arginine 66 participates in GTP binding. Glycine 70 provides a ligand contact to S-adenosyl-L-methionine. Threonine 97 is a GTP binding site. Serine 121 contributes to the S-adenosyl-L-methionine binding site. GTP is bound at residue lysine 158. Methionine 192 contributes to the S-adenosyl-L-methionine binding site. Residues cysteine 255 and cysteine 258 each coordinate [4Fe-4S] cluster. GTP is bound at residue 260–262; the sequence is RLR. Cysteine 272 serves as a coordination point for [4Fe-4S] cluster.

This sequence belongs to the radical SAM superfamily. MoaA family. As to quaternary structure, monomer and homodimer. The cofactor is [4Fe-4S] cluster.

It catalyses the reaction GTP + AH2 + S-adenosyl-L-methionine = (8S)-3',8-cyclo-7,8-dihydroguanosine 5'-triphosphate + 5'-deoxyadenosine + L-methionine + A + H(+). Its pathway is cofactor biosynthesis; molybdopterin biosynthesis. Functionally, catalyzes the cyclization of GTP to (8S)-3',8-cyclo-7,8-dihydroguanosine 5'-triphosphate. This Synechococcus elongatus (strain ATCC 33912 / PCC 7942 / FACHB-805) (Anacystis nidulans R2) protein is GTP 3',8-cyclase.